We begin with the raw amino-acid sequence, 280 residues long: uncharacterized protein (280 aa).

4 stretches are compositionally biased toward basic and acidic residues: residues 110-122 (EKQA…ERLQ), 167-177 (ATGEERAECGR), 223-261 (ARQH…RPQQ), and 269-280 (DVDRSKSCLEAE). Disordered regions lie at residues 110–137 (EKQA…KTEH), 151–177 (HRGE…ECGR), and 219–280 (TIID…LEAE).

This is an uncharacterized protein from Agrobacterium vitis (Rhizobium vitis).